A 187-amino-acid polypeptide reads, in one-letter code: Protein GrpE (187 aa).

A disordered region spans residues 1–30 (MEKKETKNETEKTNKQDNKNTKSQKKENLN).

The protein belongs to the GrpE family. In terms of assembly, homodimer.

Its subcellular location is the cytoplasm. In terms of biological role, participates actively in the response to hyperosmotic and heat shock by preventing the aggregation of stress-denatured proteins, in association with DnaK and GrpE. It is the nucleotide exchange factor for DnaK and may function as a thermosensor. Unfolded proteins bind initially to DnaJ; upon interaction with the DnaJ-bound protein, DnaK hydrolyzes its bound ATP, resulting in the formation of a stable complex. GrpE releases ADP from DnaK; ATP binding to DnaK triggers the release of the substrate protein, thus completing the reaction cycle. Several rounds of ATP-dependent interactions between DnaJ, DnaK and GrpE are required for fully efficient folding. The protein is Protein GrpE of Borreliella afzelii (strain PKo) (Borrelia afzelii).